We begin with the raw amino-acid sequence, 431 residues long: Enolase (431 aa).

Q166 is a binding site for (2R)-2-phosphoglycerate. The active-site Proton donor is E208. 3 residues coordinate Mg(2+): D245, E288, and D315. Residues K340, R369, S370, and K391 each contribute to the (2R)-2-phosphoglycerate site. K340 acts as the Proton acceptor in catalysis.

It belongs to the enolase family. It depends on Mg(2+) as a cofactor.

The protein resides in the cytoplasm. Its subcellular location is the secreted. The protein localises to the cell surface. The catalysed reaction is (2R)-2-phosphoglycerate = phosphoenolpyruvate + H2O. Its pathway is carbohydrate degradation; glycolysis; pyruvate from D-glyceraldehyde 3-phosphate: step 4/5. Its function is as follows. Catalyzes the reversible conversion of 2-phosphoglycerate (2-PG) into phosphoenolpyruvate (PEP). It is essential for the degradation of carbohydrates via glycolysis. The sequence is that of Enolase from Clostridium botulinum (strain Kyoto / Type A2).